Consider the following 272-residue polypeptide: Shikimate dehydrogenase (NADP(+)) (272 aa).

Residues 14–16 (SKS) and threonine 61 each bind shikimate. Lysine 65 (proton acceptor) is an active-site residue. An NADP(+)-binding site is contributed by glutamate 77. Residues asparagine 86 and aspartate 102 each contribute to the shikimate site. NADP(+)-binding positions include 126 to 130 (GAGGA), 149 to 154 (NRTVSR), and methionine 213. Tyrosine 215 is a shikimate binding site. Glycine 237 serves as a coordination point for NADP(+).

The protein belongs to the shikimate dehydrogenase family. As to quaternary structure, homodimer.

It catalyses the reaction shikimate + NADP(+) = 3-dehydroshikimate + NADPH + H(+). Its pathway is metabolic intermediate biosynthesis; chorismate biosynthesis; chorismate from D-erythrose 4-phosphate and phosphoenolpyruvate: step 4/7. Functionally, involved in the biosynthesis of the chorismate, which leads to the biosynthesis of aromatic amino acids. Catalyzes the reversible NADPH linked reduction of 3-dehydroshikimate (DHSA) to yield shikimate (SA). The polypeptide is Shikimate dehydrogenase (NADP(+)) (Shigella flexneri serotype 5b (strain 8401)).